The following is a 282-amino-acid chain: Tumor necrosis factor ligand superfamily member 6 (282 aa).

The Cytoplasmic segment spans residues 1–82; sequence MQQPFNYPYP…KKKRDHNAGL (82 aa). Residues 30 to 73 are disordered; that stretch reads FPCPASVPGRPGQRRPPPPPPPPPPPPTLLPSRPLPPLPPPSLK. Over residues 43–71 the composition is skewed to pro residues; that stretch reads RRPPPPPPPPPPPPTLLPSRPLPPLPPPS. Residues 83–103 traverse the membrane as a helical; Signal-anchor for type II membrane protein segment; sequence CLLVMFFMVLVALVGLGLGMF. Residues 104–282 lie on the Extracellular side of the membrane; the sequence is QLFHLQKELT…SKTFFGLYKL (179 aa). Residues 119–132 show a composition bias toward basic and acidic residues; sequence ASQRHTESSLEKQI. The interval 119–140 is disordered; sequence ASQRHTESSLEKQIGHPNLPSE. A THD domain is found at 146–282; that stretch reads KVAHLTGKPN…SKTFFGLYKL (137 aa). Asn-185 carries an N-linked (GlcNAc...) asparagine glycan. Cys-203 and Cys-234 are disulfide-bonded. N-linked (GlcNAc...) asparagine glycosylation is found at Asn-251 and Asn-261.

It belongs to the tumor necrosis factor family. In terms of assembly, homotrimer. Interacts with ARHGAP9, BAIAP2L1, BTK, CACNB3, CACNB4, CRK, DLG2, DNMBP, DOCK4, EPS8L3, FGR, FYB1, FYN, HCK, ITK, ITSN2, KALRN, LYN, MACC1, MIA, MPP4, MYO15A, NCF1, NCK1, NCK2, NCKIPSD, OSTF1, PIK3R1, PSTPIP1, RIMBP3C, SAMSN1, SH3GL3, SH3PXD2B, SH3PXD2A, SH3RF2, SKAP2, SNX33, SNX9, SORBS3, SPTA1, SRC, SRGAP1, SRGAP2, SRGAP3, TEC, TJP3 and YES1. Post-translationally, the soluble form derives from the membrane form by proteolytic processing. The membrane-bound form undergoes two successive intramembrane proteolytic cleavages. The first one is processed by ADAM10 producing an N-terminal fragment, which lacks the receptor-binding extracellular domain. This ADAM10-processed FasL (FasL APL) remnant form is still membrane anchored and further processed by SPPL2A that liberates the FasL intracellular domain (FasL ICD). FasL shedding by ADAM10 is a prerequisite for subsequent intramembrane cleavage by SPPL2A in T-cells. In terms of processing, phosphorylated by FGR on tyrosine residues; this is required for ubiquitination and subsequent internalization. N-glycosylated. Glycosylation enhances apoptotic activity. Post-translationally, monoubiquitinated.

It is found in the cell membrane. The protein localises to the cytoplasmic vesicle lumen. The protein resides in the lysosome lumen. Its subcellular location is the secreted. It localises to the nucleus. Its function is as follows. Cytokine that binds to TNFRSF6/FAS, a receptor that transduces the apoptotic signal into cells. Involved in cytotoxic T-cell-mediated apoptosis, natural killer cell-mediated apoptosis and in T-cell development. Initiates fratricidal/suicidal activation-induced cell death (AICD) in antigen-activated T-cells contributing to the termination of immune responses. TNFRSF6/FAS-mediated apoptosis also has a role in the induction of peripheral tolerance. Binds to TNFRSF6B/DcR3, a decoy receptor that blocks apoptosis. In terms of biological role, induces FAS-mediated activation of NF-kappa-B, initiating non-apoptotic signaling pathways. Can induce apoptosis but does not appear to be essential for this process. Cytoplasmic form induces gene transcription inhibition. This is Tumor necrosis factor ligand superfamily member 6 (FASLG) from Sus scrofa (Pig).